The primary structure comprises 400 residues: Phosphoglycerate kinase (400 aa).

Substrate contacts are provided by residues D24–N26, R39, H62–R65, R121, and R154. Residues K205, G296, E327, and G356 to S359 each bind ATP.

It belongs to the phosphoglycerate kinase family. Monomer.

The protein resides in the cytoplasm. It carries out the reaction (2R)-3-phosphoglycerate + ATP = (2R)-3-phospho-glyceroyl phosphate + ADP. It participates in carbohydrate degradation; glycolysis; pyruvate from D-glyceraldehyde 3-phosphate: step 2/5. The protein is Phosphoglycerate kinase of Rippkaea orientalis (strain PCC 8801 / RF-1) (Cyanothece sp. (strain PCC 8801)).